Reading from the N-terminus, the 344-residue chain is L-rhamnose-proton symporter (344 aa).

The next 10 membrane-spanning stretches (helical) occupy residues 4 to 24 (AITMGIFWHLIGAASAACFYA), 38 to 58 (WSVGGIVSWLILPWTISALLL), 68 to 88 (FNLSTLLPVFLFGAMWGIGNI), 101 to 121 (MGIGIAIGITLIVGTLMTPII), 131 to 151 (TEGGHMTLLGVFVALIGVGIV), 175 to 195 (LLLAVMCGIFSAGMSFAMNAA), 214 to 234 (LPSYVVIMGGGALVNLGFCFI), 259 to 279 (ILLSALGGLMWYLQFFFYAWG), 290 to 310 (MSWMLHMSFYVLCGGLVGLVL), and 321 to 341 (VAVLSLGCVVIIIAANIVGLG).

It belongs to the L-rhamnose transporter (TC 2.A.7.6) family.

Its subcellular location is the cell inner membrane. The catalysed reaction is L-rhamnopyranose(in) + H(+)(in) = L-rhamnopyranose(out) + H(+)(out). Its function is as follows. Uptake of L-rhamnose across the cytoplasmic membrane with the concomitant transport of protons into the cell (symport system). The polypeptide is L-rhamnose-proton symporter (Salmonella typhi).